A 1177-amino-acid polypeptide reads, in one-letter code: DNA-directed RNA polymerase subunit beta (1177 aa).

The tract at residues 1–36 is disordered; it reads MEGCILADSRQSKTAASPSPSRPQSSSNNSVPGAPN. A compositionally biased stretch (low complexity) spans 17-32; it reads SPSPSRPQSSSNNSVP.

It belongs to the RNA polymerase beta chain family. In terms of assembly, the RNAP catalytic core consists of 2 alpha, 1 beta, 1 beta' and 1 omega subunit. When a sigma factor is associated with the core the holoenzyme is formed, which can initiate transcription.

The enzyme catalyses RNA(n) + a ribonucleoside 5'-triphosphate = RNA(n+1) + diphosphate. Functionally, DNA-dependent RNA polymerase catalyzes the transcription of DNA into RNA using the four ribonucleoside triphosphates as substrates. This Mycobacterium tuberculosis (strain ATCC 25177 / H37Ra) protein is DNA-directed RNA polymerase subunit beta.